The sequence spans 872 residues: MSSPPREHSPMMRQYLDVKERYPDYLLLFRVGDFYETFFDDAKEVSSALNIVLTRRSNGSSSEVPMAGFPHHASEGYIARLVKKGYKVAVCDQVEDPSEAKGIVRREITDIVTPGITYSDKILDDRHNNYLCALALLKEGRRVVAGAAFIDVTTAEFKIAELLPEEVADFVRSLHPAELLIARKEKERFEPVRKEFPPDMVVTELDDWMFGEDQASAVLARQFKTHSLKGFGIHGNSAGKVAAGVILQYLEETRQNRLHYITRIGTLQNTDYMTLDLQTRRNLEIISSMQDGTINGSLLQVIDRTANPMGARLIRRWLQSPLKRLEDIALRLDAVEEFKDFSPLRREVHGHLSEINDLERVLSRIATFRSIPREMRQFGSALSKIPLLKEALLQTTTARLQALGRSLVEMPELVALIEKAVDPEAGASMRDGGYIRAGYHQELDELRTIASTAKDRLLEIQQEERARTSISSLKVQFNKVFGYYIEISKSNLDKVPDYYEKKQTLVNAERFTIPALKEYEAKILNAEEKSIVLEQRLFHDLSLLIAEQAALVQTNAAVIAEIDCLASFAAVAEEYGYCKPEVAGHDRLLVTGGRHPVLERMMSTDDPYVSNDLLFDRKQRLLIITGPNMAGKSSYLRQAGLIVLLAQAGSFVPAQKAEIGLVDRIFTRVGASDNLASGESTFLVEMNEAASILNNATSKSLLLLDEIGRGTSTSDGMSIAWSMSEFIHDSIGARTLFATHYHELAELETRLQGVVNYNATVIETAEKVIFLRKIVRGASDNSYGIEVARMAGMPQEVIVRAKEILAGMEKREIDVSGIKQPSIESMQISLFEEADSRLRTAIENLDLDRLTPLDALIELKKLQDLALKGCGR.

626-633 serves as a coordination point for ATP; it reads GPNMAGKS.

Belongs to the DNA mismatch repair MutS family.

Functionally, this protein is involved in the repair of mismatches in DNA. It is possible that it carries out the mismatch recognition step. This protein has a weak ATPase activity. In Chlorobium phaeobacteroides (strain DSM 266 / SMG 266 / 2430), this protein is DNA mismatch repair protein MutS.